The chain runs to 402 residues: p-cumate 2,3-dioxygenase system, ferredoxin--NAD(+) reductase component (402 aa).

FAD is bound by residues Ala-16, Lys-51, Val-83, Arg-131, and Asp-275.

Belongs to the FAD-dependent oxidoreductase family. The p-cumate 2,3-dioxygenase multicomponent enzyme system is composed of an electron transfer component and a dioxygenase component (iron sulfur protein (ISP)). The electron transfer component is composed of a ferredoxin reductase (CmtAa) and a ferredoxin (CmtAd), and the dioxygenase component is formed of a large alpha subunit (CmtAb) and a small beta subunit (CmtAc). FAD is required as a cofactor.

The enzyme catalyses 2 reduced [2Fe-2S]-[ferredoxin] + NAD(+) + H(+) = 2 oxidized [2Fe-2S]-[ferredoxin] + NADH. It functions in the pathway aromatic compound metabolism; p-cumate degradation; acetaldehyde and pyruvate from p-cumate. Component of the p-cumate 2,3-dioxygenase multicomponent enzyme system which catalyzes the incorporation of both atoms of molecular oxygen into p-cumate to form cis-2,3-dihydroxy-2,3-dihydro-p-cumate. Ferredoxin reductase catalyzes the transfer of electrons from NADH to ferredoxin (CmtAd). The sequence is that of p-cumate 2,3-dioxygenase system, ferredoxin--NAD(+) reductase component from Pseudomonas putida (Arthrobacter siderocapsulatus).